Reading from the N-terminus, the 355-residue chain is MAFNTPTLSTLIKQGEQQFQYRFPTLKRHNVIGVINRICAALSAGEHMHLDWLARQIIPTTAEEDYLIEYCLYKGIVRKQASTATGLVTVTAANDTTIPAGTVFEDTNTGLTFITTQETVVKAGTADIAVKCETTGVEGNLKAGTSLSLTSAILGLLPTATVKVMSGGADIESLSRLLARLIYRVQYPPAGGASHDYIRWATEVPGVTRAWCFERYYGGGTVGVAFACDEREDILPTPEDIARVRAYIEGHKNEVTGQFEGMPANVELYVFAPQFQAVNFKIRLAPNTPTLRQAVRKSLAAYLANAGVGALLYLSQIRATVSNTAGEVDNSVIFPTADVQLLSDNIAILGDIEWL.

The protein belongs to the Mu gp47/PBSX XkdT family.

This chain is Mu-like prophage FluMu protein gp47, found in Haemophilus influenzae (strain ATCC 51907 / DSM 11121 / KW20 / Rd).